The chain runs to 346 residues: Methylthioribose-1-phosphate isomerase (346 aa).

Substrate is bound by residues 46 to 48 (RGA), Arg89, and Gln196. The active-site Proton donor is the Asp237. 247-248 (NK) contacts substrate.

The protein belongs to the eIF-2B alpha/beta/delta subunits family. MtnA subfamily.

The catalysed reaction is 5-(methylsulfanyl)-alpha-D-ribose 1-phosphate = 5-(methylsulfanyl)-D-ribulose 1-phosphate. Its pathway is amino-acid biosynthesis; L-methionine biosynthesis via salvage pathway; L-methionine from S-methyl-5-thio-alpha-D-ribose 1-phosphate: step 1/6. Functionally, catalyzes the interconversion of methylthioribose-1-phosphate (MTR-1-P) into methylthioribulose-1-phosphate (MTRu-1-P). The sequence is that of Methylthioribose-1-phosphate isomerase from Geobacter metallireducens (strain ATCC 53774 / DSM 7210 / GS-15).